Here is a 61-residue protein sequence, read N- to C-terminus: Putative antitoxin RelB2 (61 aa).

Antitoxin component of a type II toxin-antitoxin (TA) system. Its cognate toxin is RelE2 (Potential). In Methanocaldococcus jannaschii (strain ATCC 43067 / DSM 2661 / JAL-1 / JCM 10045 / NBRC 100440) (Methanococcus jannaschii), this protein is Putative antitoxin RelB2 (relB2).